The following is a 429-amino-acid chain: Glutamyl-tRNA reductase (429 aa).

Residues 56 to 59, Ser-119, 124 to 126, and Gln-130 contribute to the substrate site; these read TCNR and EPQ. The Nucleophile role is filled by Cys-57. 199–204 contributes to the NADP(+) binding site; that stretch reads GAGEMI.

The protein belongs to the glutamyl-tRNA reductase family. As to quaternary structure, homodimer.

The catalysed reaction is (S)-4-amino-5-oxopentanoate + tRNA(Glu) + NADP(+) = L-glutamyl-tRNA(Glu) + NADPH + H(+). It functions in the pathway porphyrin-containing compound metabolism; protoporphyrin-IX biosynthesis; 5-aminolevulinate from L-glutamyl-tRNA(Glu): step 1/2. Catalyzes the NADPH-dependent reduction of glutamyl-tRNA(Glu) to glutamate 1-semialdehyde (GSA). This is Glutamyl-tRNA reductase from Herminiimonas arsenicoxydans.